The primary structure comprises 395 residues: Elongation factor Tu (395 aa).

Residues K10 to Q204 form the tr-type G domain. Residues G19 to T26 are G1. G19–T26 provides a ligand contact to GTP. Residue T26 participates in Mg(2+) binding. The segment at G60–S64 is G2. The interval D81–G84 is G3. Residues D81–H85 and N136–D139 each bind GTP. Residues N136–D139 form a G4 region. The segment at S174–L176 is G5.

It belongs to the TRAFAC class translation factor GTPase superfamily. Classic translation factor GTPase family. EF-Tu/EF-1A subfamily. As to quaternary structure, monomer.

The protein resides in the cytoplasm. The catalysed reaction is GTP + H2O = GDP + phosphate + H(+). Its function is as follows. GTP hydrolase that promotes the GTP-dependent binding of aminoacyl-tRNA to the A-site of ribosomes during protein biosynthesis. This chain is Elongation factor Tu, found in Geobacillus kaustophilus (strain HTA426).